Consider the following 302-residue polypeptide: 33 kDa chaperonin (302 aa).

2 disulfides stabilise this stretch: Cys-234–Cys-236 and Cys-267–Cys-270.

This sequence belongs to the HSP33 family. Under oxidizing conditions two disulfide bonds are formed involving the reactive cysteines. Under reducing conditions zinc is bound to the reactive cysteines and the protein is inactive.

It is found in the cytoplasm. Redox regulated molecular chaperone. Protects both thermally unfolding and oxidatively damaged proteins from irreversible aggregation. Plays an important role in the bacterial defense system toward oxidative stress. The polypeptide is 33 kDa chaperonin (Neisseria gonorrhoeae (strain ATCC 700825 / FA 1090)).